We begin with the raw amino-acid sequence, 134 residues long: ATP synthase epsilon chain, chloroplastic (134 aa).

Belongs to the ATPase epsilon chain family. F-type ATPases have 2 components, CF(1) - the catalytic core - and CF(0) - the membrane proton channel. CF(1) has five subunits: alpha(3), beta(3), gamma(1), delta(1), epsilon(1). CF(0) has three main subunits: a, b and c.

It localises to the plastid. The protein resides in the chloroplast thylakoid membrane. Functionally, produces ATP from ADP in the presence of a proton gradient across the membrane. The chain is ATP synthase epsilon chain, chloroplastic from Pelargonium hortorum (Common geranium).